The sequence spans 130 residues: MSATQNYGTGRRKTATARVFLRPGTGKISINNRGLDQFFGRETARMVVRQPLELTETVEKFDIFVTVVGGGVSGQAGAIRHGITRALIEYDETLRSPLRKAGYVTRDAREVERKKVGLRKARKRPQYSKR.

The protein belongs to the universal ribosomal protein uS9 family.

The sequence is that of Small ribosomal subunit protein uS9 from Pseudomonas paraeruginosa (strain DSM 24068 / PA7) (Pseudomonas aeruginosa (strain PA7)).